A 46-amino-acid chain; its full sequence is Probable butyrate kinase (46 aa).

It belongs to the acetokinase family.

It localises to the cytoplasm. The enzyme catalyses butanoate + ATP = butanoyl phosphate + ADP. In Geobacillus stearothermophilus (Bacillus stearothermophilus), this protein is Probable butyrate kinase (buk).